Reading from the N-terminus, the 172-residue chain is Large ribosomal subunit protein uL10 (172 aa).

Belongs to the universal ribosomal protein uL10 family. In terms of assembly, part of the ribosomal stalk of the 50S ribosomal subunit. The N-terminus interacts with L11 and the large rRNA to form the base of the stalk. The C-terminus forms an elongated spine to which L12 dimers bind in a sequential fashion forming a multimeric L10(L12)X complex.

Forms part of the ribosomal stalk, playing a central role in the interaction of the ribosome with GTP-bound translation factors. This Methylobacterium radiotolerans (strain ATCC 27329 / DSM 1819 / JCM 2831 / NBRC 15690 / NCIMB 10815 / 0-1) protein is Large ribosomal subunit protein uL10.